Reading from the N-terminus, the 270-residue chain is 3-methyl-2-oxobutanoate hydroxymethyltransferase (270 aa).

Mg(2+) contacts are provided by D41 and D80. Residues 41 to 42, D80, and K109 contribute to the 3-methyl-2-oxobutanoate site; that span reads DS. E111 serves as a coordination point for Mg(2+). E178 (proton acceptor) is an active-site residue.

This sequence belongs to the PanB family. As to quaternary structure, homodecamer; pentamer of dimers. Mg(2+) serves as cofactor.

The protein resides in the cytoplasm. It catalyses the reaction 3-methyl-2-oxobutanoate + (6R)-5,10-methylene-5,6,7,8-tetrahydrofolate + H2O = 2-dehydropantoate + (6S)-5,6,7,8-tetrahydrofolate. It functions in the pathway cofactor biosynthesis; (R)-pantothenate biosynthesis; (R)-pantoate from 3-methyl-2-oxobutanoate: step 1/2. In terms of biological role, catalyzes the reversible reaction in which hydroxymethyl group from 5,10-methylenetetrahydrofolate is transferred onto alpha-ketoisovalerate to form ketopantoate. The protein is 3-methyl-2-oxobutanoate hydroxymethyltransferase of Thermotoga maritima (strain ATCC 43589 / DSM 3109 / JCM 10099 / NBRC 100826 / MSB8).